The following is a 408-amino-acid chain: F-box A protein 155 (408 aa).

The tract at residues methionine 1–lysine 22 is disordered.

Belongs to the FTH family.

The protein is F-box A protein 155 (fbxa-155) of Caenorhabditis elegans.